A 124-amino-acid polypeptide reads, in one-letter code: Large ribosomal subunit protein bL12 (124 aa).

It belongs to the bacterial ribosomal protein bL12 family. Homodimer. Part of the ribosomal stalk of the 50S ribosomal subunit. Forms a multimeric L10(L12)X complex, where L10 forms an elongated spine to which 2 to 4 L12 dimers bind in a sequential fashion. Binds GTP-bound translation factors.

In terms of biological role, forms part of the ribosomal stalk which helps the ribosome interact with GTP-bound translation factors. Is thus essential for accurate translation. This chain is Large ribosomal subunit protein bL12, found in Ralstonia nicotianae (strain ATCC BAA-1114 / GMI1000) (Ralstonia solanacearum).